A 447-amino-acid chain; its full sequence is Ribosomal protein uS12 methylthiotransferase RimO (447 aa).

An MTTase N-terminal domain is found at 4 to 114; the sequence is PKVGFVSLGC…VMEAVHEYVP (111 aa). [4Fe-4S] cluster-binding residues include Cys-13, Cys-49, Cys-78, Cys-147, Cys-151, and Cys-154. In terms of domain architecture, Radical SAM core spans 133-370; that stretch reads LTPKHYAYLK…MQVQQEISAA (238 aa). A TRAM domain is found at 373-443; the sequence is QKRIGQTMTV…EYDLFAKLIQ (71 aa).

Belongs to the methylthiotransferase family. RimO subfamily. [4Fe-4S] cluster is required as a cofactor.

The protein localises to the cytoplasm. The catalysed reaction is L-aspartate(89)-[ribosomal protein uS12]-hydrogen + (sulfur carrier)-SH + AH2 + 2 S-adenosyl-L-methionine = 3-methylsulfanyl-L-aspartate(89)-[ribosomal protein uS12]-hydrogen + (sulfur carrier)-H + 5'-deoxyadenosine + L-methionine + A + S-adenosyl-L-homocysteine + 2 H(+). Functionally, catalyzes the methylthiolation of an aspartic acid residue of ribosomal protein uS12. In Acinetobacter baylyi (strain ATCC 33305 / BD413 / ADP1), this protein is Ribosomal protein uS12 methylthiotransferase RimO.